Consider the following 150-residue polypeptide: Large ribosomal subunit protein bL9 (150 aa).

The protein belongs to the bacterial ribosomal protein bL9 family.

Binds to the 23S rRNA. The polypeptide is Large ribosomal subunit protein bL9 (Photorhabdus laumondii subsp. laumondii (strain DSM 15139 / CIP 105565 / TT01) (Photorhabdus luminescens subsp. laumondii)).